The following is a 106-amino-acid chain: MTLYYIGILLVIIGLFAIFSGIIGFFRFPDFYTKLHAASVIESFGVPICLIGFACIAADIVNSVKLILAALLIFILNPVATHALGKASLFMKIRADSTVIARKITK.

The protein belongs to the UPF0091 family.

This chain is UPF0091 protein RC0354, found in Rickettsia conorii (strain ATCC VR-613 / Malish 7).